A 394-amino-acid polypeptide reads, in one-letter code: Phenylalanine 4-monooxygenase, chloroplastic (394 aa).

A chloroplast-targeting transit peptide spans 1–79 (MAMEVGYLRH…LNQIQAVSTA (79 aa)). Residues 75–97 (AVSTAEKEREADKTSTPPIPSSI) form a disordered region. Fe cation contacts are provided by His-252, His-257, and Glu-297.

It belongs to the biopterin-dependent aromatic amino acid hydroxylase family. As to quaternary structure, forms monomers. Fe(2+) is required as a cofactor.

It localises to the plastid. It is found in the chloroplast. The enzyme catalyses (6R)-L-erythro-5,6,7,8-tetrahydrobiopterin + L-phenylalanine + O2 = (4aS,6R)-4a-hydroxy-L-erythro-5,6,7,8-tetrahydrobiopterin + L-tyrosine. Its function is as follows. Catalyzes the hydroxylation of L-phenylalanine to L-tyrosine. Does not seem to be tetrahydropterin-dependent and shows preference for 10-formyltetrahydrofolate as cosubstrate and electron donor. The sequence is that of Phenylalanine 4-monooxygenase, chloroplastic from Physcomitrium patens (Spreading-leaved earth moss).